A 206-amino-acid polypeptide reads, in one-letter code: Pro-glucagon (206 aa).

A signal peptide spans 1–22 (MKMKSIYFIAGLLLMIVQGSWQ). The tract at residues 27 to 57 (DTEEKSRSFKASQSEPLDESRQLNEVKRHSQ) is disordered. A compositionally biased stretch (basic and acidic residues) spans 44-54 (DESRQLNEVKR). Residues 86–109 (NGQQGQEDKENDKFPDQLSSNAIS) constitute a propeptide that is removed on maturation. Position 147 is an arginine amide (arginine 147). 2 consecutive propeptides follow at residues 151–163 (DFPE…EEMG) and 199–206 (RDLLGEYQ).

Belongs to the glucagon family. Post-translationally, proglucagon is post-translationally processed in a tissue-specific manner in pancreatic A cells and intestinal L cells. In pancreatic A cells, the major bioactive hormone is glucagon cleaved by PCSK2/PC2. In the intestinal L cells PCSK1/PC1 liberates GLP-1 and GLP-2. GLP-1 is further N-terminally truncated by post-translational processing in the intestinal L cells resulting in GLP-1(7-37) GLP-1-(7-36)amide.

The protein resides in the secreted. In terms of biological role, plays a key role in glucose metabolism and homeostasis. Regulates blood glucose by increasing gluconeogenesis and decreasing glycolysis. Potent stimulator of glucose-dependent insulin release. Plays important roles on gastric motility and the suppression of plasma glucagon levels. May be involved in the suppression of satiety and stimulation of glucose disposal in peripheral tissues, independent of the actions of insulin. Has growth-promoting activities on intestinal epithelium. May also regulate the hypothalamic pituitary axis (HPA) via effects on LH, TSH, CRH, oxytocin, and vasopressin secretion. Increases islet mass through stimulation of islet neogenesis and pancreatic beta cell proliferation. Its function is as follows. Stimulates intestinal growth and up-regulates villus height in the small intestine, concomitant with increased crypt cell proliferation and decreased enterocyte apoptosis. The gastrointestinal tract, from the stomach to the colon is the principal target for GLP-2 action. Plays a key role in nutrient homeostasis, enhancing nutrient assimilation through enhanced gastrointestinal function, as well as increasing nutrient disposal. Stimulates intestinal glucose transport and decreases mucosal permeability. The protein is Pro-glucagon (GCG) of Gallus gallus (Chicken).